A 136-amino-acid polypeptide reads, in one-letter code: Small ribosomal subunit protein uS9 (136 aa).

This sequence belongs to the universal ribosomal protein uS9 family.

This is Small ribosomal subunit protein uS9 from Borrelia hermsii (strain HS1 / DAH).